We begin with the raw amino-acid sequence, 503 residues long: Probable cytosol aminopeptidase (503 aa).

Mn(2+) is bound by residues Lys-270 and Asp-275. The active site involves Lys-282. Residues Asp-293, Asp-352, and Glu-354 each coordinate Mn(2+). Arg-356 is an active-site residue.

This sequence belongs to the peptidase M17 family. Mn(2+) is required as a cofactor.

Its subcellular location is the cytoplasm. The catalysed reaction is Release of an N-terminal amino acid, Xaa-|-Yaa-, in which Xaa is preferably Leu, but may be other amino acids including Pro although not Arg or Lys, and Yaa may be Pro. Amino acid amides and methyl esters are also readily hydrolyzed, but rates on arylamides are exceedingly low.. It carries out the reaction Release of an N-terminal amino acid, preferentially leucine, but not glutamic or aspartic acids.. Its function is as follows. Presumably involved in the processing and regular turnover of intracellular proteins. Catalyzes the removal of unsubstituted N-terminal amino acids from various peptides. The polypeptide is Probable cytosol aminopeptidase (Salmonella arizonae (strain ATCC BAA-731 / CDC346-86 / RSK2980)).